The chain runs to 212 residues: N-(5'-phosphoribosyl)anthranilate isomerase (212 aa).

It belongs to the TrpF family.

The enzyme catalyses N-(5-phospho-beta-D-ribosyl)anthranilate = 1-(2-carboxyphenylamino)-1-deoxy-D-ribulose 5-phosphate. Its pathway is amino-acid biosynthesis; L-tryptophan biosynthesis; L-tryptophan from chorismate: step 3/5. This Microcystis aeruginosa (strain NIES-843 / IAM M-2473) protein is N-(5'-phosphoribosyl)anthranilate isomerase.